The chain runs to 163 residues: uncharacterized protein (163 aa).

The tract at residues 30–163 is disordered; it reads GNENTSVSSD…IYKKLGKKKR (134 aa). Basic and acidic residues predominate over residues 88 to 118; it reads ERQLQKKKEAEKIEGGKNHDNLKRKLNKVGD. The span at 119 to 133 shows a compositional bias: acidic residues; the sequence is ELNEQQSDTDDDDDD. Residue S125 is modified to Phosphoserine. T127 is subject to Phosphothreonine.

It localises to the nucleus. Its subcellular location is the nucleolus. This is an uncharacterized protein from Schizosaccharomyces pombe (strain 972 / ATCC 24843) (Fission yeast).